The chain runs to 404 residues: Argininosuccinate synthase (404 aa).

Residues alanine 10–serine 18 and alanine 37 each bind ATP. 2 residues coordinate L-citrulline: tyrosine 88 and serine 93. Glycine 118 contributes to the ATP binding site. Residues threonine 120, asparagine 124, and aspartate 125 each coordinate L-aspartate. Asparagine 124 is an L-citrulline binding site. Arginine 128, serine 178, serine 187, glutamate 263, and tyrosine 275 together coordinate L-citrulline.

Belongs to the argininosuccinate synthase family. Type 1 subfamily. As to quaternary structure, homotetramer.

The protein resides in the cytoplasm. The catalysed reaction is L-citrulline + L-aspartate + ATP = 2-(N(omega)-L-arginino)succinate + AMP + diphosphate + H(+). Its pathway is amino-acid biosynthesis; L-arginine biosynthesis; L-arginine from L-ornithine and carbamoyl phosphate: step 2/3. The chain is Argininosuccinate synthase from Hahella chejuensis (strain KCTC 2396).